We begin with the raw amino-acid sequence, 894 residues long: MTQLTVKALSEEIGTPVDRLMEQLADAGMNKASSDHVSDEEKQKLLSHLKKEHGDKSGESEPTRLTLQRKTRSTLSVAAGGGKSKDVQVEVRKKRTYVKRSTIEDDAKREAEEAAKREAEELAKREAEEQAKREAAEKAQREADEKAKREADAKREAEEKAKRAQADKAKKEMNAKNADANTQAKKEADELKRRQEEEAQRKAEQEAAKLVEEARKLAEENEARWSEEETKKKELENSDYHVTTSRYAREAEDAADRKEEGGARRKKKKPAKEEQSRGGRNQRGGKGRNKGKLAKPTSMQHGFDKSATVAKQDVVIGETIVLSELANKMSVKATEVIKVMMKMGAMATINQVIDQETAQLVAEEMGHKVVLRKENELEEAVLSDRDTNAEAVPRAPVVTIMGHVDHGKTSTLDYIRRTHVASGEAGGITQHIGAYHVETDNGMITFLDTPGHAAFTAMRARGAQATDIVVLVVAADDGVMPQTVEAIQHAKAAGVPLIVAVNKIDKEDANPDNVKNELAQYDVIPEEWGGENMFVHISAKQGTNIDGLLEAILLQSEVLELTAVAEGMASGVVVESRLDKGRGPVATVLVQSGTLNKGDIVLCGQEYGRVRAMRDELGKEITEAGPSIPVEILGLSGVPSSGDEATVVRDERKAREVANYRAGKFREVKLARQQKSKLENMFSNMTAGEVAELNVVLKADVQGSVEAIADSLLKLSTDEVKVSIVGSGVGGITETDAVLAEASNAIILGFNVRADASARRAIEAASVDLRYYSIIYQLIDEVKQAMGGMLAPEFKQEIIGLAEVRDVFKSPKLGAIAGCMVTEGLIKRNNPIRVLRDNVVIYEGELESLRRFKDDVQEVKNGYECGIGVKNYNDVRVGDQIEVFEIVEIKRTLD.

Positions 25 to 304 (ADAGMNKASS…KPTSMQHGFD (280 aa)) are disordered. 5 stretches are compositionally biased toward basic and acidic residues: residues 33-44 (SSDHVSDEEKQK), 52-62 (EHGDKSGESEP), 101-174 (STIE…KEMN), 184-239 (AKKE…ENSD), and 247-263 (YARE…EGGA). Positions 283 to 293 (RGGKGRNKGKL) are enriched in basic residues. A tr-type G domain is found at 393–562 (PRAPVVTIMG…LLQSEVLELT (170 aa)). The G1 stretch occupies residues 402 to 409 (GHVDHGKT). 402–409 (GHVDHGKT) serves as a coordination point for GTP. The segment at 427–431 (GITQH) is G2. Residues 448–451 (DTPG) are G3. GTP-binding positions include 448–452 (DTPGH) and 502–505 (NKID). The segment at 502–505 (NKID) is G4. The segment at 538 to 540 (SAK) is G5.

This sequence belongs to the TRAFAC class translation factor GTPase superfamily. Classic translation factor GTPase family. IF-2 subfamily.

It is found in the cytoplasm. Its function is as follows. One of the essential components for the initiation of protein synthesis. Protects formylmethionyl-tRNA from spontaneous hydrolysis and promotes its binding to the 30S ribosomal subunits. Also involved in the hydrolysis of GTP during the formation of the 70S ribosomal complex. The sequence is that of Translation initiation factor IF-2 from Vibrio campbellii (strain ATCC BAA-1116).